Reading from the N-terminus, the 616-residue chain is Homeodomain-interacting protein kinase 4 (616 aa).

One can recognise a Protein kinase domain in the interval 11–347 (YDIIEVLGKG…PSAALRHPFV (337 aa)). Residues 17–25 (LGKGTFGEV) and K40 contribute to the ATP site. D136 acts as the Proton acceptor in catalysis. The tract at residues 487–616 (HKARKAPAGS…SFLQHVGGHH (130 aa)) is disordered. Residues 497–512 (KSDSNFSNLIRLSQAS) are compositionally biased toward polar residues. Position 512 is a phosphoserine (S512). Residues 542–560 (REGDGPSIKDRPMDAERSG) show a composition bias toward basic and acidic residues.

It belongs to the protein kinase superfamily. CMGC Ser/Thr protein kinase family. HIPK subfamily. Autophosphorylated.

It localises to the cytoplasm. It carries out the reaction L-seryl-[protein] + ATP = O-phospho-L-seryl-[protein] + ADP + H(+). It catalyses the reaction L-threonyl-[protein] + ATP = O-phospho-L-threonyl-[protein] + ADP + H(+). In terms of biological role, protein kinase that phosphorylates TP53, and thus induces TP53 repression of BIRC5 promoter. May act as a corepressor of transcription factors (Potential). The sequence is that of Homeodomain-interacting protein kinase 4 (Hipk4) from Rattus norvegicus (Rat).